We begin with the raw amino-acid sequence, 518 residues long: GMP synthase [glutamine-hydrolyzing] (518 aa).

In terms of domain architecture, Glutamine amidotransferase type-1 spans 8–201 (TVLIIDFGSQ…VCKISGIKNN (194 aa)). The Nucleophile role is filled by cysteine 85. Residues histidine 175 and glutamate 177 contribute to the active site. A GMPS ATP-PPase domain is found at 202 to 393 (WSMAAYRDQA…LGLPEEFIKR (192 aa)). ATP is bound at residue 229–235 (SGGVDSS).

As to quaternary structure, homodimer.

The catalysed reaction is XMP + L-glutamine + ATP + H2O = GMP + L-glutamate + AMP + diphosphate + 2 H(+). It participates in purine metabolism; GMP biosynthesis; GMP from XMP (L-Gln route): step 1/1. In terms of biological role, catalyzes the synthesis of GMP from XMP. The chain is GMP synthase [glutamine-hydrolyzing] from Bartonella bacilliformis (strain ATCC 35685 / KC583 / Herrer 020/F12,63).